The sequence spans 342 residues: Phosphoribosylformylglycinamidine cyclo-ligase (342 aa).

This sequence belongs to the AIR synthase family.

The protein resides in the cytoplasm. It carries out the reaction 2-formamido-N(1)-(5-O-phospho-beta-D-ribosyl)acetamidine + ATP = 5-amino-1-(5-phospho-beta-D-ribosyl)imidazole + ADP + phosphate + H(+). It functions in the pathway purine metabolism; IMP biosynthesis via de novo pathway; 5-amino-1-(5-phospho-D-ribosyl)imidazole from N(2)-formyl-N(1)-(5-phospho-D-ribosyl)glycinamide: step 2/2. In Latilactobacillus sakei subsp. sakei (strain 23K) (Lactobacillus sakei subsp. sakei), this protein is Phosphoribosylformylglycinamidine cyclo-ligase.